The sequence spans 525 residues: Glutamate--cysteine ligase (525 aa).

This sequence belongs to the glutamate--cysteine ligase type 1 family. Type 1 subfamily.

The catalysed reaction is L-cysteine + L-glutamate + ATP = gamma-L-glutamyl-L-cysteine + ADP + phosphate + H(+). Its pathway is sulfur metabolism; glutathione biosynthesis; glutathione from L-cysteine and L-glutamate: step 1/2. The protein is Glutamate--cysteine ligase of Vibrio vulnificus (strain YJ016).